We begin with the raw amino-acid sequence, 221 residues long: Adenylate kinase (221 aa).

ATP is bound at residue 10–15; the sequence is GAGKGT. The segment at 30-59 is NMP; it reads STGDMLRAAVKAGTPLGIEAKKVMDAGGLV. Residues Thr-31, Arg-36, 57–59, 85–88, and Gln-92 each bind AMP; these read GLV and GFPR. The LID stretch occupies residues 122–159; sequence GRRVHVASGRTYHVKFNPPKADMVDDETGEALIQRDDD. Residues Arg-123 and 132-133 contribute to the ATP site; that span reads TY. Positions 156 and 167 each coordinate AMP. An ATP-binding site is contributed by Gly-207.

Belongs to the adenylate kinase family. Monomer.

The protein localises to the cytoplasm. It catalyses the reaction AMP + ATP = 2 ADP. It functions in the pathway purine metabolism; AMP biosynthesis via salvage pathway; AMP from ADP: step 1/1. Its function is as follows. Catalyzes the reversible transfer of the terminal phosphate group between ATP and AMP. Plays an important role in cellular energy homeostasis and in adenine nucleotide metabolism. The sequence is that of Adenylate kinase from Cupriavidus metallidurans (strain ATCC 43123 / DSM 2839 / NBRC 102507 / CH34) (Ralstonia metallidurans).